The sequence spans 359 residues: Mannonate dehydratase (359 aa).

This sequence belongs to the mannonate dehydratase family. Fe(2+) is required as a cofactor. Mn(2+) serves as cofactor.

It carries out the reaction D-mannonate = 2-dehydro-3-deoxy-D-gluconate + H2O. The protein operates within carbohydrate metabolism; pentose and glucuronate interconversion. Its function is as follows. Catalyzes the dehydration of D-mannonate. The chain is Mannonate dehydratase from Moorella thermoacetica (strain ATCC 39073 / JCM 9320).